The chain runs to 202 residues: 3-isopropylmalate dehydratase small subunit (202 aa).

It belongs to the LeuD family. LeuD type 1 subfamily. In terms of assembly, heterodimer of LeuC and LeuD.

The catalysed reaction is (2R,3S)-3-isopropylmalate = (2S)-2-isopropylmalate. Its pathway is amino-acid biosynthesis; L-leucine biosynthesis; L-leucine from 3-methyl-2-oxobutanoate: step 2/4. Functionally, catalyzes the isomerization between 2-isopropylmalate and 3-isopropylmalate, via the formation of 2-isopropylmaleate. This chain is 3-isopropylmalate dehydratase small subunit, found in Nocardioides sp. (strain ATCC BAA-499 / JS614).